The chain runs to 348 residues: Holliday junction branch migration complex subunit RuvB (348 aa).

The tract at residues 4–184 (ADRLIAASGR…FGIVQRLEFY (181 aa)) is large ATPase domain (RuvB-L). ATP-binding positions include Ile23, Arg24, Gly65, Lys68, Thr69, Thr70, 131–133 (EDF), Arg174, Tyr184, and Arg221. Position 69 (Thr69) interacts with Mg(2+). A small ATPAse domain (RuvB-S) region spans residues 185 to 255 (SDKDLATIVS…VADLALNLLD (71 aa)). Residues 258 to 348 (ERGFDHSDRR…GADFSEAGDE (91 aa)) are head domain (RuvB-H). 3 residues coordinate DNA: Arg294, Arg313, and Arg318.

The protein belongs to the RuvB family. As to quaternary structure, homohexamer. Forms an RuvA(8)-RuvB(12)-Holliday junction (HJ) complex. HJ DNA is sandwiched between 2 RuvA tetramers; dsDNA enters through RuvA and exits via RuvB. An RuvB hexamer assembles on each DNA strand where it exits the tetramer. Each RuvB hexamer is contacted by two RuvA subunits (via domain III) on 2 adjacent RuvB subunits; this complex drives branch migration. In the full resolvosome a probable DNA-RuvA(4)-RuvB(12)-RuvC(2) complex forms which resolves the HJ.

Its subcellular location is the cytoplasm. The catalysed reaction is ATP + H2O = ADP + phosphate + H(+). In terms of biological role, the RuvA-RuvB-RuvC complex processes Holliday junction (HJ) DNA during genetic recombination and DNA repair, while the RuvA-RuvB complex plays an important role in the rescue of blocked DNA replication forks via replication fork reversal (RFR). RuvA specifically binds to HJ cruciform DNA, conferring on it an open structure. The RuvB hexamer acts as an ATP-dependent pump, pulling dsDNA into and through the RuvAB complex. RuvB forms 2 homohexamers on either side of HJ DNA bound by 1 or 2 RuvA tetramers; 4 subunits per hexamer contact DNA at a time. Coordinated motions by a converter formed by DNA-disengaged RuvB subunits stimulates ATP hydrolysis and nucleotide exchange. Immobilization of the converter enables RuvB to convert the ATP-contained energy into a lever motion, pulling 2 nucleotides of DNA out of the RuvA tetramer per ATP hydrolyzed, thus driving DNA branch migration. The RuvB motors rotate together with the DNA substrate, which together with the progressing nucleotide cycle form the mechanistic basis for DNA recombination by continuous HJ branch migration. Branch migration allows RuvC to scan DNA until it finds its consensus sequence, where it cleaves and resolves cruciform DNA. The polypeptide is Holliday junction branch migration complex subunit RuvB (Pseudomonas putida (strain W619)).